The chain runs to 315 residues: MNSNAAQTEQPMKHNGNRMTVKDFIILAKPGIIISNSLAALGGFWIAWIQSERTGGGPGIFAAMAVAMIGTALVMASSTVFNNFFDRGMDAKMARTRTRASVTGKIPPPVMILYGTCLGACGFIMLASLNVLTAVLGLLAFLLYAVVYTLWFKRHSVLSTFVGSFPGAAPPLIGYCALTGYIDMPAILLYAIMFLWQPPHFWAIGIRRKEEYRAAGIPLLPIIKGNRATKIKMLRYTAVLTAVSLLVPLYIDVSPFYTASALLLGAIWLYRSVKGFQAADDTQWSKGMFFYSIVYFSLLFLILMADSFINAVLRT.

The next 8 helical transmembrane spans lie at P30–Q50, G56–A76, I106–L126, L132–F152, V162–I182, A186–I206, L249–L269, and F289–I309.

This sequence belongs to the UbiA prenyltransferase family. Protoheme IX farnesyltransferase subfamily. In terms of assembly, interacts with CtaA.

It localises to the cell membrane. It carries out the reaction heme b + (2E,6E)-farnesyl diphosphate + H2O = Fe(II)-heme o + diphosphate. Its pathway is porphyrin-containing compound metabolism; heme O biosynthesis; heme O from protoheme: step 1/1. In terms of biological role, converts heme B (protoheme IX) to heme O by substitution of the vinyl group on carbon 2 of heme B porphyrin ring with a hydroxyethyl farnesyl side group. The sequence is that of Protoheme IX farnesyltransferase 1 from Bacillus velezensis (strain DSM 23117 / BGSC 10A6 / LMG 26770 / FZB42) (Bacillus amyloliquefaciens subsp. plantarum).